The chain runs to 633 residues: Heterogeneous nuclear ribonucleoprotein R (633 aa).

A disordered region spans residues 1 to 24 (MANQVNGNAVQLKEEEEPMDTSSV). N-acetylalanine is present on Ala-2. Residues Lys-13 and Lys-171 each participate in a glycyl lysine isopeptide (Lys-Gly) (interchain with G-Cter in SUMO2) cross-link. 3 RRM domains span residues 165 to 244 (TEVF…ISVA), 246 to 328 (NRLF…WADP), and 341 to 411 (KVLF…LAKP). A Glycyl lysine isopeptide (Lys-Gly) (interchain with G-Cter in SUMO2) cross-link involves residue Lys-359. The residue at position 366 (Lys-366) is an N6-acetyllysine. The Nuclear localization signal signature appears at 412–418 (PDKKRKE). Positions 412-456 (PDKKRKERQAARQASRSTAYEDYYYHPPPRMPPPIRGRGRGGGRG) are disordered. The segment covering 437–446 (HPPPRMPPPI) has biased composition (pro residues). Residues 447–567 (RGRGRGGGRG…SRGSRGNRGG (121 aa)) are RNA-binding RGG-box. A 1; approximate repeat occupies 462–471 (PDYYGYEDYY). A 3 X 11 AA approximate repeats of D-D-Y-Y-G-Y-D-Y-H-D-Y region spans residues 462-497 (PDYYGYEDYYDDYYGYDYHDYRGGYEDPYYGYDDGY). Repeat unit 2 spans residues 472–482 (DDYYGYDYHDY). A 3; approximate repeat occupies 488–497 (DPYYGYDDGY). A compositionally biased stretch (gly residues) spans 501–510 (GRGGGRGGRG). The disordered stretch occupies residues 501-633 (GRGGGRGGRG…YQDTYGQQWK (133 aa)). Residues 511 to 524 (APPPPRGRGAPPPR) are compositionally biased toward pro residues. Low complexity predominate over residues 525–541 (GRAGYSQRGAPLGPPRG). The span at 558 to 570 (SRGSRGNRGGNVG) shows a compositional bias: gly residues. Residues 588–604 (TNNQQNWGSQPIAQQPL) show a composition bias toward polar residues. Positions 605–621 (QQGGDYSGNYGYNNDNQ) are enriched in low complexity. Over residues 622–633 (EFYQDTYGQQWK) the composition is skewed to polar residues.

In terms of assembly, identified in the spliceosome C complex. Identified in a IGF2BP1-dependent mRNP granule complex containing untranslated mRNAs. Interacts with GTPBP1.

It localises to the nucleus. The protein localises to the microsome. Its subcellular location is the nucleoplasm. It is found in the cytoplasm. In terms of biological role, component of ribonucleosomes, which are complexes of at least 20 other different heterogeneous nuclear ribonucleoproteins (hnRNP). hnRNP play an important role in processing of precursor mRNA in the nucleus. The sequence is that of Heterogeneous nuclear ribonucleoprotein R (HNRNPR) from Homo sapiens (Human).